The sequence spans 984 residues: MKQVVDNQTQNKELVKNGDFNQTNPVSGSWSHTSAREWSAWIDKENTADKSPIIQRTEQGQVSLSSDKGFRGAVTQKVNIDPTKKYEVKFDIETSNKAGQAFLRIMEKKDNNTRLWLSEMTSGTTNKHTLTKIYNPKLNVSEVTLELYYEKGTGSATFDNISMKAKGPKDSEHPQPVTTQIEESVNTALNKNYVFNKADYQYTLTNPSLGKIVGGILYPNATGSTTVKISDKSGKIIKEVPLSVTASTEDKFTKLLDKWNDVTIGNHVYDTNDSNMQKINQKLDETNAKNIKTIKLDSNHTFLWKDLDNLNNSAQLTATYRRLEDLAKQITNPHSTIYKNEKAIRTVKESLAWLHQNFYNVNKDIEGSANWWDFEIGVPRSITATLALMNNYFTDAEIKTYTDPIEHFVPDAGYFRKTLDNPFKALGGNLVDMGRVKIIEGLLRKDNTIIEKTSHSLKNLFTTATKAEGFYADGSYIDHTNVAYTGAYGNVLIDGLTQLLPIIQETDYKISNQELDMVYKWINQSFLPLIVKGELMDMSRGRSISREAASSHAAAVEVLRGFLRLANMSNEERNLDLKSTIKTIITSNKFYNVFNNLKSYSDIANMNKMLNDSTVATKPLKSNLSTFNSMDRLAYYNAEKDFGFALSLHSKRTLNYEGMNDENTRDWYTGDGMFYLYNSDQSHYSNHFWPTVNPYKMAGTTEKDAKREDTTKEFMSKHSKDAKEKTGQVTGTSDFVGSVKLNDHFALAAMDFTNWDRTLTAQKGWVILNDKIVFLGSNIKNTNGIGNVSTTIDQRKDDSKTPYTTYVNGKTIDLKQASSQQFTDTKSVFLESKEPGRNIGYIFFKNSTIDIERKEQTGTWNSINRTSKNTSIVSNPFITISQKHDNKGDSYGYMMVPNIDRTSFDKLANSKEVELLENSSKQQVIYDKNSQTWAVIKHDNQESLINNQFKMNKAGLYLVQKVGNDYQNVYYQPQTMTKTDQLAI.

3 stretches are compositionally biased toward polar residues: residues 1-12 (MKQVVDNQTQNK), 19-32 (DFNQ…SWSH), and 54-66 (IQRT…SLSS). 2 disordered regions span residues 1-32 (MKQV…SWSH) and 49-68 (DKSP…SSDK). Positions 1-40 (MKQVVDNQTQNKELVKNGDFNQTNPVSGSWSHTSAREWSA) are cleaved as a signal peptide. Residues Asn-429, His-479, and Tyr-488 contribute to the active site. Basic and acidic residues predominate over residues 701 to 726 (TEKDAKREDTTKEFMSKHSKDAKEKT). The disordered stretch occupies residues 701-728 (TEKDAKREDTTKEFMSKHSKDAKEKTGQ).

Belongs to the polysaccharide lyase 8 family.

It is found in the secreted. The catalysed reaction is [hyaluronan](n) = n 3-(4-deoxy-beta-D-gluc-4-enuronosyl)-N-acetyl-D-glucosamine + H2O. This chain is Hyaluronate lyase, found in Streptococcus agalactiae serotype III (strain NEM316).